The following is a 286-amino-acid chain: NAD kinase (286 aa).

Asp74 acts as the Proton acceptor in catalysis. NAD(+)-binding positions include 74 to 75, 148 to 149, Asp178, Ala186, 189 to 194, and Gln244; these read DG, ND, and TAYNLS.

The protein belongs to the NAD kinase family. Requires a divalent metal cation as cofactor.

The protein localises to the cytoplasm. It catalyses the reaction NAD(+) + ATP = ADP + NADP(+) + H(+). Its function is as follows. Involved in the regulation of the intracellular balance of NAD and NADP, and is a key enzyme in the biosynthesis of NADP. Catalyzes specifically the phosphorylation on 2'-hydroxyl of the adenosine moiety of NAD to yield NADP. The sequence is that of NAD kinase from Campylobacter jejuni subsp. jejuni serotype O:23/36 (strain 81-176).